A 464-amino-acid polypeptide reads, in one-letter code: Dihydrolipoyllysine-residue succinyltransferase component of 2-oxoglutarate dehydrogenase complex 1, mitochondrial (464 aa).

The transit peptide at 1 to 86 (MMLRAVFRRA…TALQRWVRPF (86 aa)) directs the protein to the mitochondrion. The Lipoyl-binding domain maps to 93-168 (VVEAVVPHMG…EPGNKVARIS (76 aa)). Residue Lys134 is modified to N6-lipoyllysine. Residues 168 to 242 (STSADAVSHV…DRERRVPMTR (75 aa)) form a disordered region. Residues 196–210 (EKPKVESTKVAEKPK) show a composition bias toward basic and acidic residues. Positions 211–220 (APSPPPPPPS) are enriched in pro residues. Catalysis depends on residues His435 and Asp439.

It belongs to the 2-oxoacid dehydrogenase family. Forms a 24-polypeptide structural core with octahedral symmetry. It depends on (R)-lipoate as a cofactor.

The protein resides in the mitochondrion. The catalysed reaction is N(6)-[(R)-dihydrolipoyl]-L-lysyl-[protein] + succinyl-CoA = N(6)-[(R)-S(8)-succinyldihydrolipoyl]-L-lysyl-[protein] + CoA. The protein operates within amino-acid degradation; L-lysine degradation via saccharopine pathway; glutaryl-CoA from L-lysine: step 6/6. In terms of biological role, the 2-oxoglutarate dehydrogenase complex catalyzes the overall conversion of 2-oxoglutarate to succinyl-CoA and CO(2). It contains multiple copies of three enzymatic components: 2-oxoglutarate dehydrogenase (E1), dihydrolipoamide succinyltransferase (E2) and lipoamide dehydrogenase (E3). This Arabidopsis thaliana (Mouse-ear cress) protein is Dihydrolipoyllysine-residue succinyltransferase component of 2-oxoglutarate dehydrogenase complex 1, mitochondrial.